Reading from the N-terminus, the 176-residue chain is Co-chaperone protein HscB (176 aa).

Positions 2-74 (DYFTLFGLPA…LMRAEYLLSL (73 aa)) constitute a J domain.

Belongs to the HscB family. As to quaternary structure, interacts with HscA and stimulates its ATPase activity. Interacts with IscU.

Its function is as follows. Co-chaperone involved in the maturation of iron-sulfur cluster-containing proteins. Seems to help targeting proteins to be folded toward HscA. The chain is Co-chaperone protein HscB from Escherichia coli O7:K1 (strain IAI39 / ExPEC).